The sequence spans 179 residues: Tegument protein UL55 homolog (179 aa).

Belongs to the alphaherpesvirinae HHV-1 UL55 family.

It localises to the virion tegument. The protein localises to the host nucleus matrix. The polypeptide is Tegument protein UL55 homolog (Homo sapiens (Human)).